The chain runs to 357 residues: Set1 complex component swd2 (357 aa).

WD repeat units follow at residues 24–65 (NFVG…KSLA), 110–149 (GHKQ…CQGL), 199–241 (PPHV…RVPS), and 247–289 (TQDG…QTVN).

The protein belongs to the WD repeat SWD2 family. As to quaternary structure, component of the Set1 complex composed of ash2, sdc1, set1, shg1, spp1, swd1, swd2 and swd3.

It localises to the nucleus. Its function is as follows. The Set1 complex specifically methylates 'Lys-4' of histone H3. The chain is Set1 complex component swd2 from Schizosaccharomyces pombe (strain 972 / ATCC 24843) (Fission yeast).